We begin with the raw amino-acid sequence, 131 residues long: Small ribosomal subunit protein uS8 (131 aa).

It belongs to the universal ribosomal protein uS8 family. In terms of assembly, part of the 30S ribosomal subunit. Contacts proteins S5 and S12.

In terms of biological role, one of the primary rRNA binding proteins, it binds directly to 16S rRNA central domain where it helps coordinate assembly of the platform of the 30S subunit. The chain is Small ribosomal subunit protein uS8 from Geobacillus stearothermophilus (Bacillus stearothermophilus).